We begin with the raw amino-acid sequence, 256 residues long: tRNA (guanine-N(1)-)-methyltransferase (256 aa).

S-adenosyl-L-methionine contacts are provided by residues G113 and 132–137 (VGDYVL).

It belongs to the RNA methyltransferase TrmD family. In terms of assembly, homodimer.

It is found in the cytoplasm. It carries out the reaction guanosine(37) in tRNA + S-adenosyl-L-methionine = N(1)-methylguanosine(37) in tRNA + S-adenosyl-L-homocysteine + H(+). Specifically methylates guanosine-37 in various tRNAs. The polypeptide is tRNA (guanine-N(1)-)-methyltransferase (Coprothermobacter proteolyticus (strain ATCC 35245 / DSM 5265 / OCM 4 / BT)).